The chain runs to 602 residues: UvrABC system protein C (602 aa).

Positions 17-94 (KTSGCYKMYS…IKKYKPTYNI (78 aa)) constitute a GIY-YIG domain. A UVR domain is found at 199–234 (SKLLNDIEIKMKEVIMKENFEAAIKLKETKKSLIEI).

Belongs to the UvrC family. As to quaternary structure, interacts with UvrB in an incision complex.

The protein localises to the cytoplasm. Functionally, the UvrABC repair system catalyzes the recognition and processing of DNA lesions. UvrC both incises the 5' and 3' sides of the lesion. The N-terminal half is responsible for the 3' incision and the C-terminal half is responsible for the 5' incision. This chain is UvrABC system protein C, found in Borrelia recurrentis (strain A1).